The chain runs to 144 residues: Large ribosomal subunit protein uL15 (144 aa).

The segment at 1–54 (MRLNTLSPAEGSKKAGKRLGRGIGSGLGKTGGRGHKGQKSRSGGGVRRGFEGGQ) is disordered. Positions 21-31 (RGIGSGLGKTG) are enriched in gly residues.

The protein belongs to the universal ribosomal protein uL15 family. Part of the 50S ribosomal subunit.

Binds to the 23S rRNA. The chain is Large ribosomal subunit protein uL15 from Salmonella enteritidis PT4 (strain P125109).